The chain runs to 248 residues: Probable transcriptional regulatory protein Fphi_1565 (248 aa).

This sequence belongs to the TACO1 family.

The protein resides in the cytoplasm. The polypeptide is Probable transcriptional regulatory protein Fphi_1565 (Francisella philomiragia subsp. philomiragia (strain ATCC 25017 / CCUG 19701 / FSC 153 / O#319-036)).